The sequence spans 884 residues: Probable leucine--tRNA ligase, cytoplasmic (884 aa).

The 'HIGH' region signature appears at 40 to 50 (PYMNGKLHLGH). Residues 566 to 570 (KMSKS) carry the 'KMSKS' region motif. Lys569 provides a ligand contact to ATP.

The protein belongs to the class-I aminoacyl-tRNA synthetase family.

Its subcellular location is the cytoplasm. The enzyme catalyses tRNA(Leu) + L-leucine + ATP = L-leucyl-tRNA(Leu) + AMP + diphosphate. The chain is Probable leucine--tRNA ligase, cytoplasmic from Vairimorpha ceranae (strain BRL01) (Microsporidian parasite).